A 147-amino-acid chain; its full sequence is Hemoglobin subunit beta (147 aa).

In terms of domain architecture, Globin spans 3-147 (NWTKTEKATI…VMSALGKQYH (145 aa)). Heme b-binding residues include His64 and His93.

This sequence belongs to the globin family. In terms of assembly, heterotetramer of two alpha chains and two beta chains. In terms of tissue distribution, red blood cells.

Functionally, involved in oxygen transport from gills to the various peripheral tissues. In Gymnodraco acuticeps (Antarctic dragonfish), this protein is Hemoglobin subunit beta (hbb).